The chain runs to 268 residues: Tryptophan synthase alpha chain (268 aa).

Residues Glu49 and Asp60 each act as proton acceptor in the active site.

The protein belongs to the TrpA family. As to quaternary structure, tetramer of two alpha and two beta chains.

It catalyses the reaction (1S,2R)-1-C-(indol-3-yl)glycerol 3-phosphate + L-serine = D-glyceraldehyde 3-phosphate + L-tryptophan + H2O. It participates in amino-acid biosynthesis; L-tryptophan biosynthesis; L-tryptophan from chorismate: step 5/5. In terms of biological role, the alpha subunit is responsible for the aldol cleavage of indoleglycerol phosphate to indole and glyceraldehyde 3-phosphate. The polypeptide is Tryptophan synthase alpha chain (Vibrio parahaemolyticus serotype O3:K6 (strain RIMD 2210633)).